A 154-amino-acid polypeptide reads, in one-letter code: Nuclear cap-binding protein subunit 2 (154 aa).

Residues 1–23 are disordered; that stretch reads MSTSVDLSSYRDQHFKGSRSEQE. Residues 9-23 are compositionally biased toward basic and acidic residues; it reads SYRDQHFKGSRSEQE. MRNA-binding positions include tyrosine 10, tyrosine 33, 102-106, 113-117, and 123-124; these read RVDWD, RQYGR, and QV. One can recognise an RRM domain in the interval 30–108; the sequence is TTLYVGNLSF…RLIRVDWDAG (79 aa).

This sequence belongs to the RRM NCBP2 family. Component of the nuclear cap-binding complex (CBC), a heterodimer composed of Cbp80 and Cbp20 that interacts with m7GpppG-capped RNA. Interacts with Ars2.

The protein localises to the nucleus. Functionally, component of the cap-binding complex (CBC), which binds co-transcriptionally to the 5' cap of pre-mRNAs and is involved in various processes such as pre-mRNA splicing and RNA-mediated gene silencing (RNAi). The CBC complex is involved in miRNA-mediated RNA interference via its interaction with Ars2 and is required for primary microRNAs (miRNAs) processing. Also involved in innate immunity via the short interfering RNAs (siRNAs) processing machinery by restricting the viral RNA production. In the CBC complex, Cbp20 recognizes and binds capped RNAs (m7GpppG-capped RNA) but requires Cbp80 to stabilize the movement of its N-terminal loop and lock the CBC into a high affinity cap-binding state with the cap structure. This Drosophila ananassae (Fruit fly) protein is Nuclear cap-binding protein subunit 2 (Cbp20).